The primary structure comprises 398 residues: Phosphoglycerate kinase (398 aa).

Substrate contacts are provided by residues 23–25 (DFN), R38, 61–64 (HLGK), R122, and R155. Residues K206, G297, E328, and 354–357 (GGDS) each bind ATP.

This sequence belongs to the phosphoglycerate kinase family. As to quaternary structure, monomer.

Its subcellular location is the cytoplasm. It carries out the reaction (2R)-3-phosphoglycerate + ATP = (2R)-3-phospho-glyceroyl phosphate + ADP. It functions in the pathway carbohydrate degradation; glycolysis; pyruvate from D-glyceraldehyde 3-phosphate: step 2/5. This chain is Phosphoglycerate kinase, found in Clostridium kluyveri (strain NBRC 12016).